Reading from the N-terminus, the 204-residue chain is FlaA locus 22.9 kDa protein (204 aa).

A disordered region spans residues 115–140; the sequence is EKTAEDQKKSSEDHTEGSADSKASSE.

This chain is FlaA locus 22.9 kDa protein (ylxF), found in Bacillus subtilis (strain 168).